The primary structure comprises 406 residues: Kelch domain-containing protein 2 (406 aa).

Kelch repeat units lie at residues 31–85 (ERSG…NTEG), 92–136 (SGSC…ERID), 148–207 (LGVW…TWSQ), 221–259 (HACA…NELI), 271–311 (HSLT…IQFN), and 322–359 (HTAC…IFSV).

As to quaternary structure, component of a CRL2(KLHDC2) E3 ubiquitin-protein ligase complex, also named ECS(KLHDC2) complex, composed of CUL2, Elongin BC (ELOB and ELOC), RBX1 and substrate-specific adapter KLHDC2. May form oligomers as a KLHDC2-ELOB-ELOC complex; this interaction is autoinhibitory for the E3 ligase complex as the substrate-binding site of KLHDC2 is blocked in the oligomer. Interacts with CREB3; interaction is direct and specific as it does not interact with CREB1, ATF4, ATF6, JUN, FOS, CEBPA or herpes simplex virus transactivator VP16. Autoubiquitinated by the CRL2(KLHDC2) E3 ligase complex. In terms of tissue distribution, widely expressed, with high levels in skeletal muscle, heart, pancreas and liver. Undetectable in peripheral blood leukocytes.

The protein resides in the nucleus. It participates in protein modification; protein ubiquitination. In terms of biological role, substrate-recognition component of a Cul2-RING (CRL2) E3 ubiquitin-protein ligase complex of the DesCEND (destruction via C-end degrons) pathway, which recognizes a C-degron located at the extreme C terminus of target proteins, leading to their ubiquitination and degradation. The C-degron recognized by the DesCEND pathway is usually a motif of less than ten residues and can be present in full-length proteins, truncated proteins or proteolytically cleaved forms. The CRL2(KLHDC2) complex specifically recognizes proteins with a diglycine (Gly-Gly) at the C-terminus, leading to their ubiquitination and degradation. The CRL2(KLHDC2) complex mediates ubiquitination and degradation of truncated SELENOK and SELENOS selenoproteins produced by failed UGA/Sec decoding, which end with a diglycine. The CRL2(KLHDC2) complex also recognizes proteolytically cleaved proteins ending with Gly-Gly, such as the N-terminal fragment of USP1, leading to their degradation. May also act as an indirect repressor of CREB3-mediated transcription by interfering with CREB3-DNA-binding. The protein is Kelch domain-containing protein 2 of Homo sapiens (Human).